A 297-amino-acid chain; its full sequence is Tumor necrosis factor receptor superfamily member 27 (297 aa).

Residues 1-138 lie on the Extracellular side of the membrane; it reads MDCQENEYRD…AHTVPPREAT (138 aa). TNFR-Cys repeat units lie at residues 2–41, 43–83, and 85–118; these read DCQE…DAHC, VCPP…NAIC, and DCLP…EVQC. 8 cysteine pairs are disulfide-bonded: Cys-3–Cys-15, Cys-18–Cys-31, Cys-21–Cys-41, Cys-44–Cys-58, Cys-61–Cys-75, Cys-64–Cys-83, Cys-86–Cys-104, and Cys-107–Cys-118. Residues Asn-74 and Asn-77 are each glycosylated (N-linked (GlcNAc...) asparagine). The helical; Signal-anchor for type III membrane protein transmembrane segment at 139 to 159 threads the bilayer; the sequence is LVALVGSLLVVFALAFLGLFF. Residues 160 to 297 lie on the Cytoplasmic side of the membrane; that stretch reads LYCKQIFNRH…LYVPFEVPSL (138 aa).

Associates with TRAF1, TRAF3 and TRAF6.

The protein resides in the membrane. Functionally, receptor for EDA isoform A2, but not for EDA isoform A1. Mediates the activation of the NF-kappa-B and JNK pathways. Activation seems to be mediated by binding to TRAF3 and TRAF6. The sequence is that of Tumor necrosis factor receptor superfamily member 27 (Eda2r) from Mus musculus (Mouse).